The sequence spans 301 residues: UDP-N-acetylenolpyruvoylglucosamine reductase 1 (301 aa).

The FAD-binding PCMH-type domain maps to 29–196; it reads KIGGPADILI…LEAEFQLQIG (168 aa). The active site involves R174. The active-site Proton donor is S225. E295 is an active-site residue.

The protein belongs to the MurB family. The cofactor is FAD.

The protein resides in the cytoplasm. The catalysed reaction is UDP-N-acetyl-alpha-D-muramate + NADP(+) = UDP-N-acetyl-3-O-(1-carboxyvinyl)-alpha-D-glucosamine + NADPH + H(+). The protein operates within cell wall biogenesis; peptidoglycan biosynthesis. Its function is as follows. Cell wall formation. The sequence is that of UDP-N-acetylenolpyruvoylglucosamine reductase 1 (murB1) from Bacillus anthracis.